The chain runs to 118 residues: Large ribosomal subunit protein bL20 (118 aa).

This sequence belongs to the bacterial ribosomal protein bL20 family.

In terms of biological role, binds directly to 23S ribosomal RNA and is necessary for the in vitro assembly process of the 50S ribosomal subunit. It is not involved in the protein synthesizing functions of that subunit. In Photorhabdus laumondii subsp. laumondii (strain DSM 15139 / CIP 105565 / TT01) (Photorhabdus luminescens subsp. laumondii), this protein is Large ribosomal subunit protein bL20.